The sequence spans 195 residues: Imidazoleglycerol-phosphate dehydratase (195 aa).

It belongs to the imidazoleglycerol-phosphate dehydratase family.

The protein resides in the cytoplasm. The enzyme catalyses D-erythro-1-(imidazol-4-yl)glycerol 3-phosphate = 3-(imidazol-4-yl)-2-oxopropyl phosphate + H2O. The protein operates within amino-acid biosynthesis; L-histidine biosynthesis; L-histidine from 5-phospho-alpha-D-ribose 1-diphosphate: step 6/9. In Burkholderia cenocepacia (strain ATCC BAA-245 / DSM 16553 / LMG 16656 / NCTC 13227 / J2315 / CF5610) (Burkholderia cepacia (strain J2315)), this protein is Imidazoleglycerol-phosphate dehydratase.